We begin with the raw amino-acid sequence, 206 residues long: Small ribosomal subunit protein uS4 (206 aa).

A disordered region spans residues 18–46 (NIWGRPKSPVNRREYGPGQHGQRRKGKIS). In terms of domain architecture, S4 RNA-binding spans 94 to 154 (RRLDAVVYRA…DRSKQMVALI (61 aa)).

Belongs to the universal ribosomal protein uS4 family. As to quaternary structure, part of the 30S ribosomal subunit. Contacts protein S5. The interaction surface between S4 and S5 is involved in control of translational fidelity.

Functionally, one of the primary rRNA binding proteins, it binds directly to 16S rRNA where it nucleates assembly of the body of the 30S subunit. In terms of biological role, with S5 and S12 plays an important role in translational accuracy. This chain is Small ribosomal subunit protein uS4, found in Roseobacter denitrificans (strain ATCC 33942 / OCh 114) (Erythrobacter sp. (strain OCh 114)).